The following is a 212-amino-acid chain: Transcriptional regulator GfcR (212 aa).

This sequence belongs to the purine/pyrimidine phosphoribosyltransferase family. GfcR subfamily.

In terms of biological role, DNA-binding transcriptional regulator that functions as a regulator of central sugar catabolic pathways. The polypeptide is Transcriptional regulator GfcR (Halobacterium salinarum (strain ATCC 29341 / DSM 671 / R1)).